Consider the following 312-residue polypeptide: Carbamate kinase 2 (312 aa).

Belongs to the carbamate kinase family.

Its subcellular location is the cytoplasm. It carries out the reaction hydrogencarbonate + NH4(+) + ATP = carbamoyl phosphate + ADP + H2O + H(+). Its pathway is metabolic intermediate metabolism; carbamoyl phosphate degradation; CO(2) and NH(3) from carbamoyl phosphate: step 1/1. This is Carbamate kinase 2 (arcC2) from Enterococcus faecalis (strain ATCC 700802 / V583).